A 301-amino-acid chain; its full sequence is Acetyl-coenzyme A carboxylase carboxyl transferase subunit beta (301 aa).

One can recognise a CoA carboxyltransferase N-terminal domain in the interval 25 to 294; that stretch reads LWIKDPSTGE…NSDAPAPQKP (270 aa).

It belongs to the AccD/PCCB family. In terms of assembly, acetyl-CoA carboxylase is a heterohexamer composed of biotin carboxyl carrier protein (AccB), biotin carboxylase (AccC) and two subunits each of ACCase subunit alpha (AccA) and ACCase subunit beta (AccD).

The protein localises to the cytoplasm. It carries out the reaction N(6)-carboxybiotinyl-L-lysyl-[protein] + acetyl-CoA = N(6)-biotinyl-L-lysyl-[protein] + malonyl-CoA. Its pathway is lipid metabolism; malonyl-CoA biosynthesis; malonyl-CoA from acetyl-CoA: step 1/1. In terms of biological role, component of the acetyl coenzyme A carboxylase (ACC) complex. Biotin carboxylase (BC) catalyzes the carboxylation of biotin on its carrier protein (BCCP) and then the CO(2) group is transferred by the transcarboxylase to acetyl-CoA to form malonyl-CoA. The chain is Acetyl-coenzyme A carboxylase carboxyl transferase subunit beta from Brucella canis (strain ATCC 23365 / NCTC 10854 / RM-666).